A 139-amino-acid chain; its full sequence is Small ribosomal subunit protein uS11 (139 aa).

Positions M1–I33 are disordered. Basic residues predominate over residues K14–K23.

This sequence belongs to the universal ribosomal protein uS11 family. In terms of assembly, part of the 30S ribosomal subunit. Interacts with proteins S7 and S18. Binds to IF-3.

Located on the platform of the 30S subunit, it bridges several disparate RNA helices of the 16S rRNA. Forms part of the Shine-Dalgarno cleft in the 70S ribosome. The chain is Small ribosomal subunit protein uS11 from Mycobacterium bovis (strain ATCC BAA-935 / AF2122/97).